The chain runs to 1048 residues: Histone deacetylase complex subunit SAP130 (1048 aa).

The disordered stretch occupies residues 1–95 (MGPPRHPQAG…LQSREEKQEP (95 aa)). A compositionally biased stretch (polar residues) spans 40–54 (TGLSQAPSQIANSGS). A compositionally biased stretch (basic and acidic residues) spans 67-80 (ESGRDSEVSAREHM). Residue Arg232 is modified to Omega-N-methylarginine. Phosphothreonine is present on Thr355. Phosphoserine is present on residues Ser442 and Ser465. Disordered regions lie at residues 458 to 477 (PISG…RSDN), 576 to 617 (IGTP…PEGK), and 649 to 687 (QTHS…SEIH). 2 stretches are compositionally biased toward polar residues: residues 590–613 (GIHS…QQPQ) and 649–667 (QTHS…SSPR). Lys785 is covalently cross-linked (Glycyl lysine isopeptide (Lys-Gly) (interchain with G-Cter in SUMO2)). The segment at 819 to 871 (LSMPTSDLPPGASPRKKPRKQQHVISTEEGDMMETNSTDDEKSTAKSLLVKAE) is disordered. The interactions with SIN3A and HDAC1 stretch occupies residues 836 to 1047 (PRKQQHVIST…KVSKLKRKEK (212 aa)). Ser855 carries the post-translational modification Phosphoserine. Thr856 carries the post-translational modification Phosphothreonine. Residues Lys864 and Lys869 each participate in a glycyl lysine isopeptide (Lys-Gly) (interchain with G-Cter in SUMO2) cross-link. Ser875 is subject to Phosphoserine.

This sequence belongs to the SAP130 family. As to quaternary structure, component of a mSin3A corepressor complex that contains SIN3A, SAP130, SUDS3/SAP45, ARID4B/SAP180, HDAC1 and HDAC2. Interacts (released by dead or dying cells) with CLEC4E. In terms of processing, acetylated. Post-translationally, sumoylated with SUMO1. As to expression, expressed in various cancer cell ines.

Its subcellular location is the nucleus. In terms of biological role, acts as a transcriptional repressor. May function in the assembly and/or enzymatic activity of the mSin3A corepressor complex or in mediating interactions between the complex and other regulatory complexes. The chain is Histone deacetylase complex subunit SAP130 (SAP130) from Homo sapiens (Human).